Here is a 264-residue protein sequence, read N- to C-terminus: Thymidylate synthase (264 aa).

A dUMP-binding site is contributed by Arg-21. His-51 contributes to the (6R)-5,10-methylene-5,6,7,8-tetrahydrofolate binding site. Position 126 to 127 (126 to 127 (RR)) interacts with dUMP. Cys-146 (nucleophile) is an active-site residue. Residues 166 to 169 (RSAD), Asn-177, and 207 to 209 (HLY) contribute to the dUMP site. Asp-169 provides a ligand contact to (6R)-5,10-methylene-5,6,7,8-tetrahydrofolate. Ala-263 contributes to the (6R)-5,10-methylene-5,6,7,8-tetrahydrofolate binding site.

The protein belongs to the thymidylate synthase family. Bacterial-type ThyA subfamily. Homodimer.

The protein resides in the cytoplasm. The catalysed reaction is dUMP + (6R)-5,10-methylene-5,6,7,8-tetrahydrofolate = 7,8-dihydrofolate + dTMP. Its pathway is pyrimidine metabolism; dTTP biosynthesis. Functionally, catalyzes the reductive methylation of 2'-deoxyuridine-5'-monophosphate (dUMP) to 2'-deoxythymidine-5'-monophosphate (dTMP) while utilizing 5,10-methylenetetrahydrofolate (mTHF) as the methyl donor and reductant in the reaction, yielding dihydrofolate (DHF) as a by-product. This enzymatic reaction provides an intracellular de novo source of dTMP, an essential precursor for DNA biosynthesis. The protein is Thymidylate synthase of Chelativorans sp. (strain BNC1).